The primary structure comprises 786 residues: Endonuclease MutS2 (786 aa).

Residue glycine 335–threonine 342 participates in ATP binding. A Smr domain is found at leucine 711–lysine 786.

This sequence belongs to the DNA mismatch repair MutS family. MutS2 subfamily. In terms of assembly, homodimer. Binds to stalled ribosomes, contacting rRNA.

In terms of biological role, endonuclease that is involved in the suppression of homologous recombination and thus may have a key role in the control of bacterial genetic diversity. Acts as a ribosome collision sensor, splitting the ribosome into its 2 subunits. Detects stalled/collided 70S ribosomes which it binds and splits by an ATP-hydrolysis driven conformational change. Acts upstream of the ribosome quality control system (RQC), a ribosome-associated complex that mediates the extraction of incompletely synthesized nascent chains from stalled ribosomes and their subsequent degradation. Probably generates substrates for RQC. The polypeptide is Endonuclease MutS2 (Bacillus cereus (strain Q1)).